A 77-amino-acid polypeptide reads, in one-letter code: Conotoxin G11.1 (77 aa).

An N-terminal signal peptide occupies residues 1 to 20 (MKLFLAIVLILMLQFLSTGA). Positions 21–45 (ETSDNHASRSTTALRDWLLGPKAKR) are excised as a propeptide. Intrachain disulfides connect C46–C60, C53–C65, C59–C69, and C64–C76.

It belongs to the conotoxin I3 superfamily. Expressed by the venom duct.

It localises to the secreted. In terms of biological role, may embed in the membrane and bind to the voltage sensor domain of a ion channel. Does not induce paralysis when injected in fish, leading to the hypothesis that it may be part of the sedative nirvana cabal. The sequence is that of Conotoxin G11.1 from Conus geographus (Geography cone).